Consider the following 590-residue polypeptide: (-)-alpha-terpineol synthase (590 aa).

Asp-339, Asp-343, Asp-483, Thr-487, and Glu-491 together coordinate Mg(2+). Positions 339–343 match the DDXXD motif motif; sequence DDVYD.

It belongs to the terpene synthase family. It depends on Mg(2+) as a cofactor.

The catalysed reaction is (2E)-geranyl diphosphate + H2O = (S)-alpha-terpineol + diphosphate. The protein operates within secondary metabolite biosynthesis; terpenoid biosynthesis. Functionally, mediates the conversion of geranyl diphosphate into alpha-terpineol, a monoterpenol. Monoterpenols contribute to the final grape and wine aroma and flavor. Also forms some 1,8-cineole and traces of other monoterpenoids. This chain is (-)-alpha-terpineol synthase, found in Vitis vinifera (Grape).